The following is a 250-amino-acid chain: Adenosylcobinamide-GDP ribazoletransferase (250 aa).

6 helical membrane-spanning segments follow: residues I33–I53, I63–G83, L109–T129, L137–I157, F180–F200, and I203–G223.

Belongs to the CobS family. Requires Mg(2+) as cofactor.

It is found in the cell membrane. It catalyses the reaction alpha-ribazole + adenosylcob(III)inamide-GDP = adenosylcob(III)alamin + GMP + H(+). The catalysed reaction is alpha-ribazole 5'-phosphate + adenosylcob(III)inamide-GDP = adenosylcob(III)alamin 5'-phosphate + GMP + H(+). It functions in the pathway cofactor biosynthesis; adenosylcobalamin biosynthesis; adenosylcobalamin from cob(II)yrinate a,c-diamide: step 7/7. In terms of biological role, joins adenosylcobinamide-GDP and alpha-ribazole to generate adenosylcobalamin (Ado-cobalamin). Also synthesizes adenosylcobalamin 5'-phosphate from adenosylcobinamide-GDP and alpha-ribazole 5'-phosphate. This Thermoanaerobacter sp. (strain X514) protein is Adenosylcobinamide-GDP ribazoletransferase.